The sequence spans 365 residues: Aminomethyltransferase (365 aa).

It belongs to the GcvT family. The glycine cleavage system is composed of four proteins: P, T, L and H.

It carries out the reaction N(6)-[(R)-S(8)-aminomethyldihydrolipoyl]-L-lysyl-[protein] + (6S)-5,6,7,8-tetrahydrofolate = N(6)-[(R)-dihydrolipoyl]-L-lysyl-[protein] + (6R)-5,10-methylene-5,6,7,8-tetrahydrofolate + NH4(+). The glycine cleavage system catalyzes the degradation of glycine. The chain is Aminomethyltransferase from Cronobacter sakazakii (strain ATCC BAA-894) (Enterobacter sakazakii).